The chain runs to 239 residues: Purine nucleoside phosphorylase DeoD-type (239 aa).

An a purine D-ribonucleoside-binding site is contributed by histidine 5. Phosphate is bound by residues glycine 21, arginine 25, arginine 44, and 88-91 (RVGS). Residues 180–182 (EME) and 204–205 (SD) contribute to the a purine D-ribonucleoside site. Aspartate 205 (proton donor) is an active-site residue.

The protein belongs to the PNP/UDP phosphorylase family. Homohexamer; trimer of homodimers.

The catalysed reaction is a purine D-ribonucleoside + phosphate = a purine nucleobase + alpha-D-ribose 1-phosphate. It catalyses the reaction a purine 2'-deoxy-D-ribonucleoside + phosphate = a purine nucleobase + 2-deoxy-alpha-D-ribose 1-phosphate. In terms of biological role, catalyzes the reversible phosphorolytic breakdown of the N-glycosidic bond in the beta-(deoxy)ribonucleoside molecules, with the formation of the corresponding free purine bases and pentose-1-phosphate. In Pectobacterium atrosepticum (strain SCRI 1043 / ATCC BAA-672) (Erwinia carotovora subsp. atroseptica), this protein is Purine nucleoside phosphorylase DeoD-type.